A 363-amino-acid chain; its full sequence is 3-isopropylmalate dehydrogenase (363 aa).

An NAD(+)-binding site is contributed by 78 to 91; the sequence is GPKWEHLPPAEQPE. The substrate site is built by Arg-99, Arg-109, Arg-138, and Asp-227. Residues Asp-227, Asp-251, and Asp-255 each contribute to the Mg(2+) site. 285 to 297 serves as a coordination point for NAD(+); the sequence is GSAPDIAGKDIAN.

This sequence belongs to the isocitrate and isopropylmalate dehydrogenases family. LeuB type 1 subfamily. As to quaternary structure, homodimer. Mg(2+) serves as cofactor. Requires Mn(2+) as cofactor.

The protein resides in the cytoplasm. It carries out the reaction (2R,3S)-3-isopropylmalate + NAD(+) = 4-methyl-2-oxopentanoate + CO2 + NADH. It functions in the pathway amino-acid biosynthesis; L-leucine biosynthesis; L-leucine from 3-methyl-2-oxobutanoate: step 3/4. Functionally, catalyzes the oxidation of 3-carboxy-2-hydroxy-4-methylpentanoate (3-isopropylmalate) to 3-carboxy-4-methyl-2-oxopentanoate. The product decarboxylates to 4-methyl-2 oxopentanoate. The polypeptide is 3-isopropylmalate dehydrogenase (Pectobacterium atrosepticum (strain SCRI 1043 / ATCC BAA-672) (Erwinia carotovora subsp. atroseptica)).